The following is a 258-amino-acid chain: Leucine-rich repeat-containing protein 3B (258 aa).

Residues 1 to 33 form the signal peptide; sequence MTPLDLWLSRSIPMCLLLQSLVLMVLCFPSAST. The LRRNT domain maps to 34–68; that stretch reads CPKGCTCQRSESPPHGLNVTCSLSRLKEIPPDVPP. Asparagine 51 is a glycosylation site (N-linked (GlcNAc...) asparagine). LRR repeat units follow at residues 69 to 90, 93 to 114, and 118 to 139; these read DTQL…IFHG, MLRR…AFIG, and SLEV…AFAR. Asparagine 98 carries N-linked (GlcNAc...) asparagine glycosylation. The LRRCT domain occupies 149 to 196; sequence NPWHCDCALQQALGGMAHNHERVLCRSSELRDQEGQPFMAVDADLCNL. The helical transmembrane segment at 204 to 224 threads the bilayer; it reads AMLVTMFGWFAMVISYVVYYV.

The protein belongs to the LRRC3 family.

The protein localises to the membrane. The sequence is that of Leucine-rich repeat-containing protein 3B (lrrc3b) from Danio rerio (Zebrafish).